We begin with the raw amino-acid sequence, 575 residues long: Hemagglutinin (575 aa).

The Extracellular segment spans residues 1–543 (LMVVTSNADR…LDNHTILLYY (543 aa)). Disulfide bonds link Cys-12–Cys-489, Cys-68–Cys-80, Cys-102–Cys-151, and Cys-496–Cys-500. Asn-33 and Asn-67 each carry an N-linked (GlcNAc...) asparagine; by host glycan. Asn-131, Asn-153, Asn-171, Asn-309, Asn-338, Asn-497, Asn-523, and Asn-536 each carry an N-linked (GlcNAc...) asparagine; by host glycan. A helical transmembrane segment spans residues 544–564 (STAASSLAVTLMIAIFIVYMV). At 565–575 (SRDNVSCSICL) the chain is on the cytoplasmic side. S-palmitoyl cysteine; by host attachment occurs at residues Cys-571 and Cys-574.

It belongs to the influenza viruses hemagglutinin family. In terms of assembly, homotrimer of disulfide-linked HA1-HA2. Post-translationally, palmitoylated. In terms of processing, in natural infection, inactive HA is matured into HA1 and HA2 outside the cell by one or more trypsin-like, arginine-specific endoprotease secreted by the bronchial epithelial cells. One identified protease that may be involved in this process is secreted in lungs by club cells.

It is found in the virion membrane. Its subcellular location is the host apical cell membrane. Functionally, binds to sialic acid-containing receptors on the cell surface, bringing about the attachment of the virus particle to the cell. Plays a major role in the determination of host range restriction and virulence. Class I viral fusion protein. Responsible for penetration of the virus into the cell cytoplasm by mediating the fusion of the membrane of the endocytosed virus particle with the endosomal membrane. Low pH in endosomes induce an irreversible conformational change in HA2, releasing the fusion hydrophobic peptide. Several trimers are required to form a competent fusion pore. The protein is Hemagglutinin of Influenza B virus (strain B/Hong Kong/8/1973).